Reading from the N-terminus, the 279-residue chain is Tryptophan synthase alpha chain (279 aa).

Residues Glu50 and Asp61 each act as proton acceptor in the active site.

The protein belongs to the TrpA family. Tetramer of two alpha and two beta chains.

It catalyses the reaction (1S,2R)-1-C-(indol-3-yl)glycerol 3-phosphate + L-serine = D-glyceraldehyde 3-phosphate + L-tryptophan + H2O. Its pathway is amino-acid biosynthesis; L-tryptophan biosynthesis; L-tryptophan from chorismate: step 5/5. Functionally, the alpha subunit is responsible for the aldol cleavage of indoleglycerol phosphate to indole and glyceraldehyde 3-phosphate. This Allorhizobium ampelinum (strain ATCC BAA-846 / DSM 112012 / S4) (Agrobacterium vitis (strain S4)) protein is Tryptophan synthase alpha chain.